The primary structure comprises 264 residues: Apolipoprotein A-I (264 aa).

The signal sequence occupies residues 1-18 (MKAVVLAVAVLFLTGSQA). Tandem repeats lie at residues 67–88 (LNLL…EQLG) and 89–110 (PVTR…QEMN). Residues 67–264 (LNLLENWDTF…DEATQKLNTQ (198 aa)) form a 10 X approximate tandem repeats region. Met-109 is modified (methionine sulfoxide). One copy of the 3; half-length repeat lies at 111–121 (KDLEEVKQKVQ). Tandem repeats lie at residues 122 to 143 (PYLD…PKVE), 144 to 165 (PLGA…KQLV), and 166 to 187 (PLGE…TKLA). The stretch at 188–207 (PYSDQMRDRLAERLTALRDN) is one 7; truncated repeat. Methionine sulfoxide is present on Met-193. Repeat unit 8 spans residues 208-229 (PKLAEYHARATEHLKKLGEKTK). One copy of the 9; half-length repeat lies at 230–240 (PTLEDLRQGLM). Met-240 carries the methionine sulfoxide modification. Copy 10 of the repeat occupies 241-264 (PWLESLKAKALSVLDEATQKLNTQ).

This sequence belongs to the apolipoprotein A1/A4/E family. In terms of assembly, homodimer. Interacts with APOA1BP and CLU. Component of a sperm activating protein complex (SPAP), consisting of APOA1, an immunoglobulin heavy chain, an immunoglobulin light chain and albumin. Interacts with NDRG1. Interacts with SCGB3A2. Interacts with NAXE and YJEFN3. Glycosylated. Post-translationally, palmitoylated. In terms of processing, phosphorylation sites are present in the extracellular medium.

The protein resides in the secreted. Its function is as follows. Participates in the reverse transport of cholesterol from tissues to the liver for excretion by promoting cholesterol efflux from tissues and by acting as a cofactor for the lecithin cholesterol acyltransferase (LCAT). As part of the SPAP complex, activates spermatozoa motility. The protein is Apolipoprotein A-I (Apoa1) of Nannospalax galili (Northern Israeli blind subterranean mole rat).